A 184-amino-acid chain; its full sequence is Large ribosomal subunit protein uL15 (184 aa).

Positions 1 to 45 (MNLSSLRPAKGSVRNKKRVGRGQGSGNGTTAGKGNKGQQARSGYK) are disordered. Positions 21-35 (RGQGSGNGTTAGKGN) are enriched in gly residues.

The protein belongs to the universal ribosomal protein uL15 family. Part of the 50S ribosomal subunit.

Its function is as follows. Binds to the 23S rRNA. In Chlorobium chlorochromatii (strain CaD3), this protein is Large ribosomal subunit protein uL15.